The following is a 141-amino-acid chain: LOB domain-containing protein 34 (141 aa).

The region spanning 16–119 (NQCAACRHQR…SPLNYVAPVI (104 aa)) is the LOB domain.

This sequence belongs to the LOB domain-containing protein family.

This is LOB domain-containing protein 34 (LBD34) from Arabidopsis thaliana (Mouse-ear cress).